We begin with the raw amino-acid sequence, 159 residues long: ATP synthase subunit delta, mitochondrial (159 aa).

The transit peptide at 1-23 (MFRLSAARTLAKSVNTVVAKRTY) directs the protein to the mitochondrion.

This sequence belongs to the ATPase epsilon chain family. As to quaternary structure, F-type ATPases have 2 components, CF(1) - the catalytic core - and CF(0) - the membrane proton channel. CF(1) has five subunits: alpha(3), beta(3), gamma(1), delta(1), epsilon(1). CF(0) has three main subunits: a, b and c.

The protein localises to the mitochondrion. Its subcellular location is the mitochondrion inner membrane. In terms of biological role, mitochondrial membrane ATP synthase (F(1)F(0) ATP synthase or Complex V) produces ATP from ADP in the presence of a proton gradient across the membrane which is generated by electron transport complexes of the respiratory chain. F-type ATPases consist of two structural domains, F(1) - containing the extramembraneous catalytic core, and F(0) - containing the membrane proton channel, linked together by a central stalk and a peripheral stalk. During catalysis, ATP turnover in the catalytic domain of F(1) is coupled via a rotary mechanism of the central stalk subunits to proton translocation. Part of the complex F(1) domain and of the central stalk which is part of the complex rotary element. Rotation of the central stalk against the surrounding alpha(3)beta(3) subunits leads to hydrolysis of ATP in three separate catalytic sites on the beta subunits. This Kluyveromyces lactis (strain ATCC 8585 / CBS 2359 / DSM 70799 / NBRC 1267 / NRRL Y-1140 / WM37) (Yeast) protein is ATP synthase subunit delta, mitochondrial (ATP16).